We begin with the raw amino-acid sequence, 324 residues long: Fructose-1,6-bisphosphatase class 1 (324 aa).

Residues Glu-88, Asp-107, Leu-109, and Asp-110 each contribute to the Mg(2+) site. Substrate-binding positions include 110-113 (DGSS), Asn-199, and Lys-265. Glu-271 lines the Mg(2+) pocket.

The protein belongs to the FBPase class 1 family. Homotetramer. The cofactor is Mg(2+).

It localises to the cytoplasm. The enzyme catalyses beta-D-fructose 1,6-bisphosphate + H2O = beta-D-fructose 6-phosphate + phosphate. It participates in carbohydrate biosynthesis; gluconeogenesis. In Neisseria meningitidis serogroup A / serotype 4A (strain DSM 15465 / Z2491), this protein is Fructose-1,6-bisphosphatase class 1.